The chain runs to 66 residues: Beta-defensin 107A (66 aa).

The signal sequence occupies residues 1–22; that stretch reads MKIFFFIFAALILLAQIFQART. 2 cysteine pairs are disulfide-bonded: Cys-37/Cys-51 and Cys-41/Cys-60.

This sequence belongs to the beta-defensin family.

It is found in the secreted. Has antibacterial activity. This Macaca fascicularis (Crab-eating macaque) protein is Beta-defensin 107A (DEFB107A).